Here is a 947-residue protein sequence, read N- to C-terminus: Bifunctional glutamine synthetase adenylyltransferase/adenylyl-removing enzyme (947 aa).

The segment at 1–440 (MTPLSSPLSQ…VFNELIGDDE (440 aa)) is adenylyl removase. The segment at 450–947 (SEPWREVWQD…ASWRKWLVAV (498 aa)) is adenylyl transferase.

This sequence belongs to the GlnE family. Requires Mg(2+) as cofactor.

It carries out the reaction [glutamine synthetase]-O(4)-(5'-adenylyl)-L-tyrosine + phosphate = [glutamine synthetase]-L-tyrosine + ADP. It catalyses the reaction [glutamine synthetase]-L-tyrosine + ATP = [glutamine synthetase]-O(4)-(5'-adenylyl)-L-tyrosine + diphosphate. Its function is as follows. Involved in the regulation of glutamine synthetase GlnA, a key enzyme in the process to assimilate ammonia. When cellular nitrogen levels are high, the C-terminal adenylyl transferase (AT) inactivates GlnA by covalent transfer of an adenylyl group from ATP to specific tyrosine residue of GlnA, thus reducing its activity. Conversely, when nitrogen levels are low, the N-terminal adenylyl removase (AR) activates GlnA by removing the adenylyl group by phosphorolysis, increasing its activity. The regulatory region of GlnE binds the signal transduction protein PII (GlnB) which indicates the nitrogen status of the cell. In Salmonella gallinarum (strain 287/91 / NCTC 13346), this protein is Bifunctional glutamine synthetase adenylyltransferase/adenylyl-removing enzyme.